A 139-amino-acid chain; its full sequence is Large ribosomal subunit protein uL16 (139 aa).

It belongs to the universal ribosomal protein uL16 family. As to quaternary structure, part of the 50S ribosomal subunit.

Binds 23S rRNA and is also seen to make contacts with the A and possibly P site tRNAs. This chain is Large ribosomal subunit protein uL16, found in Treponema denticola (strain ATCC 35405 / DSM 14222 / CIP 103919 / JCM 8153 / KCTC 15104).